Here is a 227-residue protein sequence, read N- to C-terminus: Ubiquitin-conjugating enzyme E2 6 (227 aa).

Residues methionine 1–arginine 206 lie on the Cytoplasmic side of the membrane. The UBC core domain occupies glycine 5–glutamate 163. Cysteine 87 acts as the Glycyl thioester intermediate in catalysis. Residues tryptophan 207–alanine 225 form a helical membrane-spanning segment.

It belongs to the ubiquitin-conjugating enzyme family.

The protein localises to the endoplasmic reticulum membrane. The enzyme catalyses S-ubiquitinyl-[E1 ubiquitin-activating enzyme]-L-cysteine + [E2 ubiquitin-conjugating enzyme]-L-cysteine = [E1 ubiquitin-activating enzyme]-L-cysteine + S-ubiquitinyl-[E2 ubiquitin-conjugating enzyme]-L-cysteine.. The protein operates within protein modification; protein ubiquitination. Its function is as follows. Catalyzes the covalent attachment of ubiquitin to other proteins. Functions in degradation of misfolded or regulated proteins localized in the endoplasmic reticulum (ER) lumen or membrane via the ubiquitin-proteasome system. Cognate E2 conjugating enzyme for the doa10 ubiquitin ligase complex, which is part of the ERAD-C pathway responsible for the rapid degradation of membrane proteins with misfolded cytoplasmic domains. The polypeptide is Ubiquitin-conjugating enzyme E2 6 (ubc6) (Schizosaccharomyces pombe (strain 972 / ATCC 24843) (Fission yeast)).